The primary structure comprises 225 residues: Fibronectin type III domain-containing protein (225 aa).

The first 17 residues, 1-17 (MFSFGIILLTVVSFTNA), serve as a signal peptide directing secretion. Residues 106–206 (PPTNVIVEST…MPLNVKTPDI (101 aa)) enclose the Fibronectin type-III domain.

Component of the organic matrix of calcified shell layers like nacre and prisms.

Its subcellular location is the secreted. In Mytilus californianus (California mussel), this protein is Fibronectin type III domain-containing protein.